Here is a 124-residue protein sequence, read N- to C-terminus: MAFDKDAFLTALDSMTVLELNDLVKAIEEKFGVSAAAMAAPGAGAGAAAAVVEEKTEFNVVLLDAGAQKVSVIKAVRELTGLGLKEAKDLVDGAPKNVKEGIAKADAEAALKKLLEAGAKAEIK.

Belongs to the bacterial ribosomal protein bL12 family. Homodimer. Part of the ribosomal stalk of the 50S ribosomal subunit. Forms a multimeric L10(L12)X complex, where L10 forms an elongated spine to which 2 to 4 L12 dimers bind in a sequential fashion. Binds GTP-bound translation factors.

In terms of biological role, forms part of the ribosomal stalk which helps the ribosome interact with GTP-bound translation factors. Is thus essential for accurate translation. The protein is Large ribosomal subunit protein bL12 of Leptothrix cholodnii (strain ATCC 51168 / LMG 8142 / SP-6) (Leptothrix discophora (strain SP-6)).